A 206-amino-acid polypeptide reads, in one-letter code: MTANELTTGDFTDADEPFSLFGTWLKDAEKNEVNDPNAVALATVDPDGLPNVRMVLLKGFDEHGFVFYTNFESQKGQELLSTRKAAMCFHWKSLRRQVRLRGPVEIVTAEEADEYFRSRPRGSRIGAWASKQSRPLESRFALEKAVAEFTARHAIGEIPRPEYWSGFRIRPTSIEFWHDRPFRLHDRVEFRRPVPEGGWEKVRMYP.

Residues 53–58 (RMVLLK), 68–69 (YT), Lys-75, and Gln-97 each bind FMN. Lys-58 contributes to the substrate binding site. Substrate is bound by residues Tyr-115, Arg-119, and Ser-123. FMN contacts are provided by residues 132 to 133 (QS) and Trp-177. A substrate-binding site is contributed by 183 to 185 (RLH). FMN is bound at residue Arg-187.

Belongs to the pyridoxamine 5'-phosphate oxidase family. Homodimer. The cofactor is FMN.

It catalyses the reaction pyridoxamine 5'-phosphate + O2 + H2O = pyridoxal 5'-phosphate + H2O2 + NH4(+). The catalysed reaction is pyridoxine 5'-phosphate + O2 = pyridoxal 5'-phosphate + H2O2. It participates in cofactor metabolism; pyridoxal 5'-phosphate salvage; pyridoxal 5'-phosphate from pyridoxamine 5'-phosphate: step 1/1. The protein operates within cofactor metabolism; pyridoxal 5'-phosphate salvage; pyridoxal 5'-phosphate from pyridoxine 5'-phosphate: step 1/1. In terms of biological role, catalyzes the oxidation of either pyridoxine 5'-phosphate (PNP) or pyridoxamine 5'-phosphate (PMP) into pyridoxal 5'-phosphate (PLP). The sequence is that of Pyridoxine/pyridoxamine 5'-phosphate oxidase from Sinorhizobium fredii (strain NBRC 101917 / NGR234).